The primary structure comprises 225 residues: Riboflavin kinase (225 aa).

Residues 1–89 form a unknown region; sequence MPDIKYLKKL…SRIFSPDLDI (89 aa). The interval 90 to 225 is riboflavin kinase; that stretch reads LELEGKVLKG…LKKQGTENQK (136 aa). 99–104 contributes to the CDP binding site; the sequence is GLGEGQ. 2 residues coordinate Mg(2+): T128 and N130. FMN is bound by residues T185 and E193. Residue 198–201 participates in CDP binding; it reads IKLR.

This sequence belongs to the archaeal riboflavin kinase family. Mg(2+) serves as cofactor.

It catalyses the reaction riboflavin + CTP = CDP + FMN + H(+). It participates in cofactor biosynthesis; FMN biosynthesis; FMN from riboflavin (CTP route): step 1/1. Catalyzes the CTP-dependent phosphorylation of riboflavin (vitamin B2) to form flavin mononucleotide (FMN). The polypeptide is Riboflavin kinase (ribK) (Methanosarcina barkeri (strain Fusaro / DSM 804)).